The sequence spans 411 residues: Tubulin beta-2 chain (411 aa).

Positions 37, 106, 110, 111, 112, 172, and 194 each coordinate GTP. Glu-37 is a binding site for Mg(2+). Residues 392–411 (QYQDATAEPEGXYEEDYDEA) are disordered. Residues 402-411 (GXYEEDYDEA) are compositionally biased toward acidic residues.

This sequence belongs to the tubulin family. As to quaternary structure, dimer of alpha and beta chains. A typical microtubule is a hollow water-filled tube with an outer diameter of 25 nm and an inner diameter of 15 nM. Alpha-beta heterodimers associate head-to-tail to form protofilaments running lengthwise along the microtubule wall with the beta-tubulin subunit facing the microtubule plus end conferring a structural polarity. Microtubules usually have 13 protofilaments but different protofilament numbers can be found in some organisms and specialized cells. Requires Mg(2+) as cofactor.

The protein resides in the cytoplasm. It is found in the cytoskeleton. In terms of biological role, tubulin is the major constituent of microtubules, a cylinder consisting of laterally associated linear protofilaments composed of alpha- and beta-tubulin heterodimers. Microtubules grow by the addition of GTP-tubulin dimers to the microtubule end, where a stabilizing cap forms. Below the cap, tubulin dimers are in GDP-bound state, owing to GTPase activity of alpha-tubulin. This is Tubulin beta-2 chain (TUBB2) from Anemia phyllitidis (Fern).